Consider the following 327-residue polypeptide: Aliphatic sulfonates import ATP-binding protein SsuB (327 aa).

The interval 21–54 (ELAQPRIADGDAQDAAVYERDGGAHAPPDGDRAD) is disordered. Residues 37-54 (VYERDGGAHAPPDGDRAD) are compositionally biased toward basic and acidic residues. Positions 66-285 (VRLTRVSKRY…ARASAAFAAL (220 aa)) constitute an ABC transporter domain. Residue 98–105 (GRSGCGKS) participates in ATP binding. The interval 300–327 (APAAPNAAGPEGASRGRAAPASGLRWAV) is disordered.

This sequence belongs to the ABC transporter superfamily. Aliphatic sulfonates importer (TC 3.A.1.17.2) family. In terms of assembly, the complex is composed of two ATP-binding proteins (SsuB), two transmembrane proteins (SsuC) and a solute-binding protein (SsuA).

It is found in the cell inner membrane. The enzyme catalyses ATP + H2O + aliphatic sulfonate-[sulfonate-binding protein]Side 1 = ADP + phosphate + aliphatic sulfonateSide 2 + [sulfonate-binding protein]Side 1.. Functionally, part of the ABC transporter complex SsuABC involved in aliphatic sulfonates import. Responsible for energy coupling to the transport system. The chain is Aliphatic sulfonates import ATP-binding protein SsuB from Burkholderia pseudomallei (strain K96243).